The primary structure comprises 168 residues: G/U mismatch-specific DNA glycosylase (168 aa).

The protein belongs to the uracil-DNA glycosylase (UDG) superfamily. TDG/mug family. As to quaternary structure, binds DNA as a monomer.

It is found in the cytoplasm. It catalyses the reaction Specifically hydrolyzes mismatched double-stranded DNA and polynucleotides, releasing free uracil.. Its function is as follows. Excises ethenocytosine and uracil, which can arise by alkylation or deamination of cytosine, respectively, from the corresponding mispairs with guanine in ds-DNA. It is capable of hydrolyzing the carbon-nitrogen bond between the sugar-phosphate backbone of the DNA and the mispaired base. The complementary strand guanine functions in substrate recognition. Required for DNA damage lesion repair in stationary-phase cells. This is G/U mismatch-specific DNA glycosylase from Salmonella dublin (strain CT_02021853).